A 273-amino-acid chain; its full sequence is MHIIELIKALILGLVEGATEFAPVSSTGHMIIVDDMWLKSSEFLGKYGANTFKVVIQLGSVLAAVVVFKDKFFELLYLRKGEVRKGPRLTLMHIFVGLLPAGVLGVLFEDYIDEHLFSTKTVLIGLVLGALLMIAADRFGKRTVAQTVDDITYKQAFIVGLVQCLSLWPGFSRSGSTISGGVLVGMSHRAAADFTFIMAVPIMAGASAISLLKNWQYITFDALPFFVVGFISAFVFALLAIRFFLRLINRVRLVPFAIYRIVLAAVIYVVYFA.

8 helical membrane-spanning segments follow: residues 3–23 (IIELIKALILGLVEGATEFAP), 48–68 (GANTFKVVIQLGSVLAAVVVF), 89–109 (LTLMHIFVGLLPAGVLGVLFE), 116–136 (LFSTKTVLIGLVLGALLMIAA), 151–171 (ITYKQAFIVGLVQCLSLWPGF), 192–212 (ADFTFIMAVPIMAGASAISLL), 225–245 (FFVVGFISAFVFALLAIRFFL), and 253–273 (LVPFAIYRIVLAAVIYVVYFA).

The protein belongs to the UppP family.

The protein resides in the cell membrane. It carries out the reaction di-trans,octa-cis-undecaprenyl diphosphate + H2O = di-trans,octa-cis-undecaprenyl phosphate + phosphate + H(+). Functionally, catalyzes the dephosphorylation of undecaprenyl diphosphate (UPP). Confers resistance to bacitracin. The sequence is that of Undecaprenyl-diphosphatase from Anoxybacillus flavithermus (strain DSM 21510 / WK1).